A 372-amino-acid chain; its full sequence is Methylthioribose-1-phosphate isomerase 1 (372 aa).

The active-site Proton donor is the aspartate 254.

Belongs to the eIF-2B alpha/beta/delta subunits family. MtnA subfamily.

The protein resides in the cytoplasm. It is found in the nucleus. The catalysed reaction is 5-(methylsulfanyl)-alpha-D-ribose 1-phosphate = 5-(methylsulfanyl)-D-ribulose 1-phosphate. It functions in the pathway amino-acid biosynthesis; L-methionine biosynthesis via salvage pathway; L-methionine from S-methyl-5-thio-alpha-D-ribose 1-phosphate: step 1/6. In terms of biological role, catalyzes the interconversion of methylthioribose-1-phosphate (MTR-1-P) into methylthioribulose-1-phosphate (MTRu-1-P). This is Methylthioribose-1-phosphate isomerase 1 from Trypanosoma cruzi (strain CL Brener).